The following is a 117-amino-acid chain: MHILDSVDAASLRNDVPEFRAGDTLKVHVNIIEGKNSRVQVFQGFVLGRQGDGVRETFTVRKVSFGVGVERTFPVHSPIIDKIEVVTKGDVRRAKLYYMRALRGKAAKIKEKRDFAK.

This sequence belongs to the bacterial ribosomal protein bL19 family.

In terms of biological role, this protein is located at the 30S-50S ribosomal subunit interface and may play a role in the structure and function of the aminoacyl-tRNA binding site. This chain is Large ribosomal subunit protein bL19, found in Paenarthrobacter aurescens (strain TC1).